Reading from the N-terminus, the 255-residue chain is 4-hydroxy-tetrahydrodipicolinate reductase (255 aa).

Residues Gly9–Met14, Gly89–Thr91, and Ala115–Phe118 each bind NAD(+). His145 (proton donor/acceptor) is an active-site residue. His146 is a binding site for (S)-2,3,4,5-tetrahydrodipicolinate. The active-site Proton donor is the Lys149. A (S)-2,3,4,5-tetrahydrodipicolinate-binding site is contributed by Gly155–Thr156.

It belongs to the DapB family.

The protein resides in the cytoplasm. It carries out the reaction (S)-2,3,4,5-tetrahydrodipicolinate + NAD(+) + H2O = (2S,4S)-4-hydroxy-2,3,4,5-tetrahydrodipicolinate + NADH + H(+). The catalysed reaction is (S)-2,3,4,5-tetrahydrodipicolinate + NADP(+) + H2O = (2S,4S)-4-hydroxy-2,3,4,5-tetrahydrodipicolinate + NADPH + H(+). It participates in amino-acid biosynthesis; L-lysine biosynthesis via DAP pathway; (S)-tetrahydrodipicolinate from L-aspartate: step 4/4. Its function is as follows. Catalyzes the conversion of 4-hydroxy-tetrahydrodipicolinate (HTPA) to tetrahydrodipicolinate. This chain is 4-hydroxy-tetrahydrodipicolinate reductase, found in Streptococcus mutans serotype c (strain ATCC 700610 / UA159).